We begin with the raw amino-acid sequence, 411 residues long: Bifunctional protein GlmU (411 aa).

The interval 1–204 (MDAIILCAGK…IGKLHGVELN (204 aa)) is pyrophosphorylase. UTP-binding positions include 6 to 9 (LCAG), glutamine 74, and glycine 79. Threonine 80, glycine 130, asparagine 142, and asparagine 158 together coordinate N-acetyl-alpha-D-glucosamine 1-phosphate. The segment at 205–224 (GYWNDIGHPWDVLSANSHFL) is linker. Residues 225–411 (NKIISKISGK…DELVITKKRN (187 aa)) form an N-acetyltransferase region. The active-site Proton acceptor is the histidine 308. The acetyl-CoA site is built by alanine 384 and lysine 401.

In the N-terminal section; belongs to the N-acetylglucosamine-1-phosphate uridyltransferase family. It in the C-terminal section; belongs to the transferase hexapeptide repeat family.

The catalysed reaction is N-acetyl-alpha-D-glucosamine 1-phosphate + UTP + H(+) = UDP-N-acetyl-alpha-D-glucosamine + diphosphate. The enzyme catalyses alpha-D-glucosamine 1-phosphate + acetyl-CoA = N-acetyl-alpha-D-glucosamine 1-phosphate + CoA + H(+). It functions in the pathway nucleotide-sugar biosynthesis; UDP-N-acetyl-alpha-D-glucosamine biosynthesis; N-acetyl-alpha-D-glucosamine 1-phosphate from alpha-D-glucosamine 6-phosphate (route II): step 2/2. Its pathway is nucleotide-sugar biosynthesis; UDP-N-acetyl-alpha-D-glucosamine biosynthesis; UDP-N-acetyl-alpha-D-glucosamine from N-acetyl-alpha-D-glucosamine 1-phosphate: step 1/1. In terms of biological role, catalyzes the last two sequential reactions in the de novo biosynthetic pathway for UDP-N-acetyl-glucosamine (UDP-GlcNAc). Responsible for the acetylation of GlcN-1-P to GlcNAc-1-P, and for the uridyl transfer from UTP to GlcNAc-1-P, to produce UDP-GlcNAc and pyrophosphate. This Methanococcus maripaludis (strain C5 / ATCC BAA-1333) protein is Bifunctional protein GlmU.